A 328-amino-acid polypeptide reads, in one-letter code: MNRRNFIKAASCGALLTGALPSVSHAAAENRPPIPGSLGMLYDSTLCVGCQACVTKCQDINFPERNPQGEQTWSNNDKLSPYTNNIIQVWTSGTGVNKDQEENGYAYIKKQCMHCVDPNCVSVCPVSALKKDPKTGIVHYDKDVCTGCRYCMVACPYNVPKYDYNNPFGALHKCELCNQKGVERLDKGGLPGCVEVCPAGAVIFGTREELMAEAKKRLALKPGSEYHYPRQTLKSGDTYLHTVPKYYPHLYGEKEGGGTQVLVLTGVPYENLDLPKLDDLSTGARSENIQHTLYKGMMLPLAVLAGLTVLVRRNTKNDHHDGGDDHES.

Residues 1-27 (MNRRNFIKAASCGALLTGALPSVSHAA) form the signal peptide. 3 consecutive 4Fe-4S ferredoxin-type domains span residues 38-68 (LGMLYDSTLCVGCQACVTKCQDINFPERNPQ), 103-134 (NGYAYIKKQCMHCVDPNCVSVCPVSALKKDPK), and 136-165 (GIVHYDKDVCTGCRYCMVACPYNVPKYDYN). [4Fe-4S] cluster-binding residues include C47, C50, C53, C57, C112, C115, C120, C124, C145, C148, C151, C155, C174, C177, C193, and C197.

[4Fe-4S] cluster serves as cofactor.

It is found in the periplasm. Its function is as follows. Participates in the periplasmic electron-transferring activity of hydrogenase 2 during its catalytic turnover. This Escherichia coli O157:H7 protein is Hydrogenase-2 operon protein HybA (hybA).